We begin with the raw amino-acid sequence, 297 residues long: Pyridoxal 5'-phosphate synthase subunit SNZ1 (297 aa).

Position 23 (D23) interacts with D-ribose 5-phosphate. K80 (schiff-base intermediate with D-ribose 5-phosphate) is an active-site residue. G152 is a binding site for D-ribose 5-phosphate. R164 is a D-glyceraldehyde 3-phosphate binding site. Residues G214 and 235-236 contribute to the D-ribose 5-phosphate site; that span reads GS.

The protein belongs to the PdxS/SNZ family. In terms of assembly, homohexamer. Interacts with AIM18.

It catalyses the reaction aldehydo-D-ribose 5-phosphate + D-glyceraldehyde 3-phosphate + L-glutamine = pyridoxal 5'-phosphate + L-glutamate + phosphate + 3 H2O + H(+). The protein operates within cofactor biosynthesis; pyridoxal 5'-phosphate biosynthesis. Functionally, catalyzes the formation of pyridoxal 5'-phosphate from ribose 5-phosphate (RBP), glyceraldehyde 3-phosphate (G3P) and ammonia. The ammonia is provided by a SNO isoform. Can also use ribulose 5-phosphate and dihydroxyacetone phosphate as substrates, resulting from enzyme-catalyzed isomerization of RBP and G3P, respectively. This Saccharomyces cerevisiae (strain ATCC 204508 / S288c) (Baker's yeast) protein is Pyridoxal 5'-phosphate synthase subunit SNZ1 (SNZ1).